Consider the following 732-residue polypeptide: Adducin-related protein 1 (732 aa).

Disordered regions lie at residues M1–Y22 and T684–K732. The span at R685–A705 shows a compositional bias: polar residues. Basic residues predominate over residues K716–K732.

The protein belongs to the aldolase class II family. Adducin subfamily.

It localises to the cytoplasm. The protein resides in the cytoskeleton. It is found in the cell membrane. Functionally, membrane-cytoskeleton-associated protein that promotes the assembly of the spectrin-actin network. Plays a role in time-dependent memmory loss and the retention of conditioned behavior over time. The chain is Adducin-related protein 1 from Caenorhabditis elegans.